Consider the following 227-residue polypeptide: ATP phosphoribosyltransferase (227 aa).

This sequence belongs to the ATP phosphoribosyltransferase family. Short subfamily. Heteromultimer composed of HisG and HisZ subunits.

The protein localises to the cytoplasm. The enzyme catalyses 1-(5-phospho-beta-D-ribosyl)-ATP + diphosphate = 5-phospho-alpha-D-ribose 1-diphosphate + ATP. It participates in amino-acid biosynthesis; L-histidine biosynthesis; L-histidine from 5-phospho-alpha-D-ribose 1-diphosphate: step 1/9. Functionally, catalyzes the condensation of ATP and 5-phosphoribose 1-diphosphate to form N'-(5'-phosphoribosyl)-ATP (PR-ATP). Has a crucial role in the pathway because the rate of histidine biosynthesis seems to be controlled primarily by regulation of HisG enzymatic activity. This Bordetella avium (strain 197N) protein is ATP phosphoribosyltransferase.